The chain runs to 285 residues: MQIKSFLLAAAAAPAALGAAVNTIKPFNCGTDAPSRQHIQMTKELAEKEAAMAAEGIMTAQATINVNVYFHVVAASTALSDGYVTSTMINNQVATLNKAYAPHNIQFTLKGTDYTINSNWAVDGSELAMKKALRKGTYKDLNLYILKDLGDALGYCYFPTSVTSKSNDWYYDGCSILYDTLPGGSLTNYNLGHTSTHEIGHWFGLYHTFQGGCSGNGDYVSDTPAQASASSGCPTGRDSCPSQPGLDPIHNYMDYSYDTCYEEFTSGQRTRMTSYWNQYRANASV.

Positions 1-18 are cleaved as a signal peptide; sequence MQIKSFLLAAAAAPAALG. Residue His-197 coordinates Zn(2+). Glu-198 is a catalytic residue. Position 201 (His-201) interacts with Zn(2+). A disulfide bond links Cys-233 and Cys-260. N-linked (GlcNAc...) asparagine glycosylation is present at Asn-282.

It belongs to the peptidase M43B family.

It localises to the secreted. Functionally, secreted metalloproteinase that allows assimilation of proteinaceous substrates. The chain is Extracellular metalloprotease NCU07200 from Neurospora crassa (strain ATCC 24698 / 74-OR23-1A / CBS 708.71 / DSM 1257 / FGSC 987).